The primary structure comprises 196 residues: Pyridoxal 5'-phosphate synthase subunit PdxT (196 aa).

47 to 49 is an L-glutamine binding site; the sequence is GES. Catalysis depends on C79, which acts as the Nucleophile. Residues R106 and 134–135 each bind L-glutamine; that span reads IR. Catalysis depends on charge relay system residues H170 and E172.

The protein belongs to the glutaminase PdxT/SNO family. In terms of assembly, in the presence of PdxS, forms a dodecamer of heterodimers. Only shows activity in the heterodimer.

The enzyme catalyses aldehydo-D-ribose 5-phosphate + D-glyceraldehyde 3-phosphate + L-glutamine = pyridoxal 5'-phosphate + L-glutamate + phosphate + 3 H2O + H(+). The catalysed reaction is L-glutamine + H2O = L-glutamate + NH4(+). It participates in cofactor biosynthesis; pyridoxal 5'-phosphate biosynthesis. Functionally, catalyzes the hydrolysis of glutamine to glutamate and ammonia as part of the biosynthesis of pyridoxal 5'-phosphate. The resulting ammonia molecule is channeled to the active site of PdxS. The sequence is that of Pyridoxal 5'-phosphate synthase subunit PdxT from Bacillus mycoides (strain KBAB4) (Bacillus weihenstephanensis).